The primary structure comprises 297 residues: Urease accessory protein UreD 2 (297 aa).

The protein belongs to the UreD family. UreD, UreF and UreG form a complex that acts as a GTP-hydrolysis-dependent molecular chaperone, activating the urease apoprotein by helping to assemble the nickel containing metallocenter of UreC. The UreE protein probably delivers the nickel.

The protein localises to the cytoplasm. In terms of biological role, required for maturation of urease via the functional incorporation of the urease nickel metallocenter. This Methylorubrum populi (strain ATCC BAA-705 / NCIMB 13946 / BJ001) (Methylobacterium populi) protein is Urease accessory protein UreD 2.